A 175-amino-acid polypeptide reads, in one-letter code: Succinate dehydrogenase assembly factor 2, mitochondrial (175 aa).

The disordered stretch occupies residues 42 to 71 (PFSDPELAHANNSLPSNSEEWPLPEPLDRT). Polar residues predominate over residues 51–60 (ANNSLPSNSE).

The protein belongs to the SDHAF2 family. As to quaternary structure, interacts with the flavoprotein subunit within the SDH catalytic dimer.

The protein resides in the mitochondrion matrix. Plays an essential role in the assembly of succinate dehydrogenase (SDH), an enzyme complex (also referred to as respiratory complex II) that is a component of both the tricarboxylic acid (TCA) cycle and the mitochondrial electron transport chain, and which couples the oxidation of succinate to fumarate with the reduction of ubiquinone (coenzyme Q) to ubiquinol. Required for flavinylation (covalent attachment of FAD) of the flavoprotein subunit of the SDH catalytic dimer. In Cryptococcus neoformans var. neoformans serotype D (strain B-3501A) (Filobasidiella neoformans), this protein is Succinate dehydrogenase assembly factor 2, mitochondrial.